The following is a 301-amino-acid chain: Phosphatidylglycerol--prolipoprotein diacylglyceryl transferase (301 aa).

The next 4 helical transmembrane spans lie at 10–30 (IAFSLGPVKVHWYGLMYLASF), 57–77 (LLFYAMMGVVLGGRVGYMLFY), 92–112 (VWEGGMSFHGGLIGVLLAVAW), and 119–139 (LQMFDVLDFGAPLVPVGLGFG). Position 140 (Arg-140) interacts with a 1,2-diacyl-sn-glycero-3-phospho-(1'-sn-glycerol). A run of 3 helical transmembrane segments spans residues 202–222 (PSQLYEAFLEGLVMFIVLWLF), 230–250 (YAVSGLFALLYGVFRFLVEFV), and 264–284 (LTRGQILSLPLIVIGLFLFWL).

It belongs to the Lgt family.

It is found in the cell inner membrane. The enzyme catalyses L-cysteinyl-[prolipoprotein] + a 1,2-diacyl-sn-glycero-3-phospho-(1'-sn-glycerol) = an S-1,2-diacyl-sn-glyceryl-L-cysteinyl-[prolipoprotein] + sn-glycerol 1-phosphate + H(+). Its pathway is protein modification; lipoprotein biosynthesis (diacylglyceryl transfer). Functionally, catalyzes the transfer of the diacylglyceryl group from phosphatidylglycerol to the sulfhydryl group of the N-terminal cysteine of a prolipoprotein, the first step in the formation of mature lipoproteins. The sequence is that of Phosphatidylglycerol--prolipoprotein diacylglyceryl transferase from Xylella fastidiosa (strain 9a5c).